The following is a 146-amino-acid chain: Large ribosomal subunit protein uL22 (146 aa).

The segment at 1 to 39 (MAETQTTTPKKKAERRAPPPARARKNRPAAPAPGPHASL) is disordered.

Belongs to the universal ribosomal protein uL22 family. Part of the 50S ribosomal subunit.

Functionally, this protein binds specifically to 23S rRNA; its binding is stimulated by other ribosomal proteins, e.g. L4, L17, and L20. It is important during the early stages of 50S assembly. It makes multiple contacts with different domains of the 23S rRNA in the assembled 50S subunit and ribosome. The globular domain of the protein is located near the polypeptide exit tunnel on the outside of the subunit, while an extended beta-hairpin is found that lines the wall of the exit tunnel in the center of the 70S ribosome. This is Large ribosomal subunit protein uL22 from Anaeromyxobacter dehalogenans (strain 2CP-1 / ATCC BAA-258).